The chain runs to 152 residues: Protein-export protein SecB (152 aa).

The protein belongs to the SecB family. Homotetramer, a dimer of dimers. One homotetramer interacts with 1 SecA dimer.

The protein resides in the cytoplasm. Its function is as follows. One of the proteins required for the normal export of preproteins out of the cell cytoplasm. It is a molecular chaperone that binds to a subset of precursor proteins, maintaining them in a translocation-competent state. It also specifically binds to its receptor SecA. This is Protein-export protein SecB from Rickettsia felis (strain ATCC VR-1525 / URRWXCal2) (Rickettsia azadi).